The following is a 163-amino-acid chain: NADPH-dependent 7-cyano-7-deazaguanine reductase (163 aa).

Over residues 1 to 10 (MSKPPRRSPR) the composition is skewed to basic residues. A disordered region spans residues 1 to 23 (MSKPPRRSPRKPTPASPELQLGH). Cysteine 61 functions as the Thioimide intermediate in the catalytic mechanism. The active-site Proton donor is aspartate 68. Substrate contacts are provided by residues 83-85 (LES) and 102-103 (HE).

Belongs to the GTP cyclohydrolase I family. QueF type 1 subfamily.

The protein resides in the cytoplasm. The catalysed reaction is 7-aminomethyl-7-carbaguanine + 2 NADP(+) = 7-cyano-7-deazaguanine + 2 NADPH + 3 H(+). Its pathway is tRNA modification; tRNA-queuosine biosynthesis. Its function is as follows. Catalyzes the NADPH-dependent reduction of 7-cyano-7-deazaguanine (preQ0) to 7-aminomethyl-7-deazaguanine (preQ1). The chain is NADPH-dependent 7-cyano-7-deazaguanine reductase from Rhodopseudomonas palustris (strain BisA53).